Reading from the N-terminus, the 89-residue chain is Acyl carrier protein MbtL (89 aa).

The Carrier domain occupies 8-83 (NHVSAELLGI…DLQAAIAAEP (76 aa)). O-(pantetheine 4'-phosphoryl)serine is present on Ser43.

4'-phosphopantetheine is transferred from CoA to a specific serine of apo-ACP, leading to the activated holo-ACP form.

It is found in the cytoplasm. It functions in the pathway siderophore biosynthesis; mycobactin biosynthesis. Its function is as follows. Acyl carrier protein involved in the formation of acyl-S-ACP intermediates within the mycobactin biosynthesis process. This is Acyl carrier protein MbtL (mbtL) from Mycolicibacterium paratuberculosis (strain ATCC BAA-968 / K-10) (Mycobacterium paratuberculosis).